The following is an 89-amino-acid chain: Elongation factor 1-beta (89 aa).

Belongs to the EF-1-beta/EF-1-delta family.

Functionally, promotes the exchange of GDP for GTP in EF-1-alpha/GDP, thus allowing the regeneration of EF-1-alpha/GTP that could then be used to form the ternary complex EF-1-alpha/GTP/AAtRNA. This Methanocaldococcus jannaschii (strain ATCC 43067 / DSM 2661 / JAL-1 / JCM 10045 / NBRC 100440) (Methanococcus jannaschii) protein is Elongation factor 1-beta (ef1b).